The following is a 256-amino-acid chain: Acetyl-coenzyme A carboxylase carboxyl transferase subunit alpha (256 aa).

Residues 1–236 (MSDVARILKE…KTAIVDELAE (236 aa)) enclose the CoA carboxyltransferase C-terminal domain.

This sequence belongs to the AccA family. As to quaternary structure, acetyl-CoA carboxylase is a heterohexamer composed of biotin carboxyl carrier protein (AccB), biotin carboxylase (AccC) and two subunits each of ACCase subunit alpha (AccA) and ACCase subunit beta (AccD).

It localises to the cytoplasm. The catalysed reaction is N(6)-carboxybiotinyl-L-lysyl-[protein] + acetyl-CoA = N(6)-biotinyl-L-lysyl-[protein] + malonyl-CoA. The protein operates within lipid metabolism; malonyl-CoA biosynthesis; malonyl-CoA from acetyl-CoA: step 1/1. Its function is as follows. Component of the acetyl coenzyme A carboxylase (ACC) complex. First, biotin carboxylase catalyzes the carboxylation of biotin on its carrier protein (BCCP) and then the CO(2) group is transferred by the carboxyltransferase to acetyl-CoA to form malonyl-CoA. This is Acetyl-coenzyme A carboxylase carboxyl transferase subunit alpha from Streptococcus thermophilus (strain ATCC BAA-250 / LMG 18311).